We begin with the raw amino-acid sequence, 458 residues long: V-type ATP synthase beta chain (458 aa).

It belongs to the ATPase alpha/beta chains family.

Functionally, produces ATP from ADP in the presence of a proton gradient across the membrane. The V-type beta chain is a regulatory subunit. The polypeptide is V-type ATP synthase beta chain (Fusobacterium nucleatum subsp. nucleatum (strain ATCC 25586 / DSM 15643 / BCRC 10681 / CIP 101130 / JCM 8532 / KCTC 2640 / LMG 13131 / VPI 4355)).